Here is a 177-residue protein sequence, read N- to C-terminus: Protein-export protein SecB (177 aa).

The protein belongs to the SecB family. As to quaternary structure, homotetramer, a dimer of dimers. One homotetramer interacts with 1 SecA dimer.

The protein localises to the cytoplasm. Its function is as follows. One of the proteins required for the normal export of preproteins out of the cell cytoplasm. It is a molecular chaperone that binds to a subset of precursor proteins, maintaining them in a translocation-competent state. It also specifically binds to its receptor SecA. The chain is Protein-export protein SecB from Ehrlichia canis (strain Jake).